The primary structure comprises 157 residues: 6,7-dimethyl-8-ribityllumazine synthase (157 aa).

5-amino-6-(D-ribitylamino)uracil is bound by residues F22, 57–59 (AYE), and 81–83 (TVI). 86-87 (GT) is a binding site for (2S)-2-hydroxy-3-oxobutyl phosphate. H89 serves as the catalytic Proton donor. Position 114 (F114) interacts with 5-amino-6-(D-ribitylamino)uracil. R128 contributes to the (2S)-2-hydroxy-3-oxobutyl phosphate binding site.

Belongs to the DMRL synthase family. In terms of assembly, forms an icosahedral capsid composed of 60 subunits, arranged as a dodecamer of pentamers.

The enzyme catalyses (2S)-2-hydroxy-3-oxobutyl phosphate + 5-amino-6-(D-ribitylamino)uracil = 6,7-dimethyl-8-(1-D-ribityl)lumazine + phosphate + 2 H2O + H(+). The protein operates within cofactor biosynthesis; riboflavin biosynthesis; riboflavin from 2-hydroxy-3-oxobutyl phosphate and 5-amino-6-(D-ribitylamino)uracil: step 1/2. Its function is as follows. Catalyzes the formation of 6,7-dimethyl-8-ribityllumazine by condensation of 5-amino-6-(D-ribitylamino)uracil with 3,4-dihydroxy-2-butanone 4-phosphate. This is the penultimate step in the biosynthesis of riboflavin. The polypeptide is 6,7-dimethyl-8-ribityllumazine synthase (Haemophilus influenzae (strain 86-028NP)).